We begin with the raw amino-acid sequence, 134 residues long: Thioredoxin-like protein Clot (134 aa).

A Thioredoxin domain is found at Met1–Thr134. Residues Cys48 and Cys51 each act as nucleophile in the active site. A disulfide bond links Cys48 and Cys51.

The protein belongs to the thioredoxin family.

In terms of biological role, probable thiol-disulfide oxidoreductase that may participate in various redox reactions. The sequence is that of Thioredoxin-like protein Clot from Arabidopsis thaliana (Mouse-ear cress).